The following is a 568-amino-acid chain: Oxygen-dependent choline dehydrogenase (568 aa).

Residue 6 to 35 (DYIIVGAGSAGCVLADRLSASGEHYILLLE) coordinates FAD. Catalysis depends on His470, which acts as the Proton acceptor.

This sequence belongs to the GMC oxidoreductase family. Requires FAD as cofactor.

The enzyme catalyses choline + A = betaine aldehyde + AH2. It carries out the reaction betaine aldehyde + NAD(+) + H2O = glycine betaine + NADH + 2 H(+). It participates in amine and polyamine biosynthesis; betaine biosynthesis via choline pathway; betaine aldehyde from choline (cytochrome c reductase route): step 1/1. In terms of biological role, involved in the biosynthesis of the osmoprotectant glycine betaine. Catalyzes the oxidation of choline to betaine aldehyde and betaine aldehyde to glycine betaine at the same rate. The protein is Oxygen-dependent choline dehydrogenase of Photobacterium profundum (strain SS9).